A 378-amino-acid polypeptide reads, in one-letter code: MNKKMGKIVAGTALIISVAFSSSIAQAAEEAKEKYLIGFKEQEVMSQFVDQIDGDEYSISSQAEDVEIDLLHEFDFIPVLSVELDPEDVDALELDPAIAYIEEDAEVTTMQTVPWGINRVQAPIAQSRGFTGTGVRVAVLDTGISNHADLRIRGGASFVPGEPNISDGNGHGTQVAGTIAALNNSIGVLGVAPNVDLYGVKVLGASGSGSISGIAQGLQWAANNGMHIANMSLGSSAGSATMEQAVNQATASGVLVVAASGNSGAGNVGFPARYANAMAVGATDQNNNRATFSQYGAGLDIVAPGVGVQSTVPGNGYASFNGTSMATPHVAGVAALVKQKNPSWSNVQIRNHLKNTATNLGNTTQFGSGLVNAEAATR.

The first 27 residues, 1–27, serve as a signal peptide directing secretion; that stretch reads MNKKMGKIVAGTALIISVAFSSSIAQA. A propeptide spanning residues 28–110 is cleaved from the precursor; sequence AEEAKEKYLI…IEEDAEVTTM (83 aa). Gln-111 contacts Ca(2+). In terms of domain architecture, Peptidase S8 spans 114-377; the sequence is PWGINRVQAP…SGLVNAEAAT (264 aa). Asp-141 acts as the Charge relay system in catalysis. Asp-149 is a binding site for Ca(2+). The Charge relay system role is filled by His-171. Leu-182, Asn-184, Ile-186, Val-188, Ala-272, Tyr-274, and Ala-277 together coordinate Ca(2+). Ser-324 functions as the Charge relay system in the catalytic mechanism.

This sequence belongs to the peptidase S8 family. The cofactor is Ca(2+).

The protein resides in the secreted. Digests elastin efficiently, has a substrate preference for Ala in P1 position. In Bacillus sp. (strain YaB), this protein is Alkaline elastase YaB (ale).